The sequence spans 160 residues: Endoribonuclease YbeY (160 aa).

Residues His-121, His-125, and His-131 each contribute to the Zn(2+) site.

Belongs to the endoribonuclease YbeY family. Requires Zn(2+) as cofactor.

The protein resides in the cytoplasm. In terms of biological role, single strand-specific metallo-endoribonuclease involved in late-stage 70S ribosome quality control and in maturation of the 3' terminus of the 16S rRNA. In Syntrophus aciditrophicus (strain SB), this protein is Endoribonuclease YbeY.